The primary structure comprises 86 residues: Large ribosomal subunit protein eL43 (86 aa).

The C4-type zinc-finger motif lies at 38–59; sequence CPVCGRKAVRRISTGIWQCQKC.

This sequence belongs to the eukaryotic ribosomal protein eL43 family. Zn(2+) serves as cofactor.

This Thermococcus onnurineus (strain NA1) protein is Large ribosomal subunit protein eL43.